Consider the following 882-residue polypeptide: Bifunctional heparan sulfate N-deacetylase/N-sulfotransferase 1 (882 aa).

Residues 1–17 (MPALACLRRLCRHVSPQ) lie on the Cytoplasmic side of the membrane. Residues 1 to 169 (MPALACLRRL…VAYGVGIIGF (169 aa)) are sufficient for localization to Golgi membrane. A helical; Signal-anchor for type II membrane protein transmembrane segment spans residues 18-39 (AVLFLLFIFCLFSVFISAYYLY). The heparan sulfate N-deacetylase 1 stretch occupies residues 40-598 (GWKRGLEPSA…KRHKDIWSKE (559 aa)). At 40-882 (GWKRGLEPSA…WLREDLQNTR (843 aa)) the chain is on the lumenal side. N-linked (GlcNAc...) asparagine glycosylation is found at N231, N351, and N401. Residues 599–882 (KTCDRFPKLL…WLREDLQNTR (284 aa)) form a heparan sulfate N-sulfotransferase 1 region. K614 (for sulfotransferase activity) is an active-site residue. 614 to 618 (KTGTT) is an adenosine 3',5'-bisphosphate binding site. N-linked (GlcNAc...) asparagine glycosylation is present at N667. S712 and W817 together coordinate adenosine 3',5'-bisphosphate. Residues C818 and C828 are joined by a disulfide bond. 833-837 (KGRKY) provides a ligand contact to adenosine 3',5'-bisphosphate.

Belongs to the sulfotransferase 1 family. NDST subfamily. In terms of assembly, monomer. As to quaternary structure, interacts with heparan sulfate co-polymerase subunits EXT1 and EXT2. Interacts with NDST1 isoform 3. Interacts with heparan sulfate co-polymerase subunits EXT1 and EXT2. Interacts with NDST1 isoform 1. Widely expressed. Expression is most abundant in heart, liver and pancreas.

The protein resides in the golgi apparatus. The protein localises to the trans-Golgi network membrane. It localises to the cis-Golgi network membrane. The enzyme catalyses N-acetyl-alpha-D-glucosaminyl-[heparan sulfate](n) + H2O = alpha-D-glucosaminyl-[heparan sulfate](n) + acetate. It catalyses the reaction alpha-D-glucosaminyl-[heparan sulfate](n) + 3'-phosphoadenylyl sulfate = N-sulfo-alpha-D-glucosaminyl-[heparan sulfate](n) + adenosine 3',5'-bisphosphate + 2 H(+). The protein operates within glycan metabolism; heparan sulfate biosynthesis. Its pathway is glycan metabolism; heparin biosynthesis. Its function is as follows. Essential bifunctional enzyme that catalyzes both the N-deacetylation and the N-sulfation of glucosamine (GlcNAc) of the glycosaminoglycan in heparan sulfate. Modifies the GlcNAc-GlcA disaccharide repeating sugar backbone to make N-sulfated heparosan, a prerequisite substrate for later modifications in heparin biosynthesis. Plays a role in determining the extent and pattern of sulfation of heparan sulfate. Participates in biosynthesis of heparan sulfate that can ultimately serve as L-selectin ligands, thereby playing a role in inflammatory response. Required for the exosomal release of SDCBP, CD63 and syndecan. Lacks both N-deacetylase and N-sulfotransferase activities. Acts as a dominant negative on isoform 1, likely by changing the composition of enzyme complexes responsible for elongation and modification of heparan sulfates. The polypeptide is Bifunctional heparan sulfate N-deacetylase/N-sulfotransferase 1 (Homo sapiens (Human)).